The primary structure comprises 78 residues: Exodeoxyribonuclease 7 small subunit (78 aa).

The protein belongs to the XseB family. In terms of assembly, heterooligomer composed of large and small subunits.

The protein localises to the cytoplasm. The catalysed reaction is Exonucleolytic cleavage in either 5'- to 3'- or 3'- to 5'-direction to yield nucleoside 5'-phosphates.. In terms of biological role, bidirectionally degrades single-stranded DNA into large acid-insoluble oligonucleotides, which are then degraded further into small acid-soluble oligonucleotides. The protein is Exodeoxyribonuclease 7 small subunit of Mycobacterium leprae (strain TN).